A 28-amino-acid polypeptide reads, in one-letter code: Glutathione S-transferase 5 (28 aa).

The 28-residue stretch at 1–28 (PNYKLTYFNLRGRAEISRYLFAYAGIKY) folds into the GST N-terminal domain. Glutathione is bound at residue tyrosine 7.

The protein belongs to the GST superfamily. Sigma family. In terms of assembly, homodimer.

It is found in the cytoplasm. It catalyses the reaction RX + glutathione = an S-substituted glutathione + a halide anion + H(+). Conjugation of reduced glutathione to a wide number of exogenous and endogenous hydrophobic electrophiles. This Gallus gallus (Chicken) protein is Glutathione S-transferase 5.